The chain runs to 88 residues: Large ribosomal subunit protein bL31B (88 aa).

This sequence belongs to the bacterial ribosomal protein bL31 family. Type B subfamily. In terms of assembly, part of the 50S ribosomal subunit.

This is Large ribosomal subunit protein bL31B from Nocardia farcinica (strain IFM 10152).